A 517-amino-acid polypeptide reads, in one-letter code: Crotonobetaine/carnitine--CoA ligase (517 aa).

The protein belongs to the ATP-dependent AMP-binding enzyme family.

It carries out the reaction 4-(trimethylamino)butanoate + ATP + CoA = 4-(trimethylamino)butanoyl-CoA + AMP + diphosphate. It catalyses the reaction crotonobetaine + ATP + CoA = crotonobetainyl-CoA + AMP + diphosphate. The catalysed reaction is (R)-carnitine + ATP + CoA = (R)-carnitinyl-CoA + AMP + diphosphate. The protein operates within amine and polyamine metabolism; carnitine metabolism. Catalyzes the transfer of CoA to carnitine, generating the initial carnitinyl-CoA needed for the CaiB reaction cycle. Also has activity toward crotonobetaine and gamma-butyrobetaine. This chain is Crotonobetaine/carnitine--CoA ligase, found in Escherichia coli O17:K52:H18 (strain UMN026 / ExPEC).